Reading from the N-terminus, the 303-residue chain is DnaJ homolog subfamily C member 17 (303 aa).

Positions 11–76 (DLYALLGIEE…AARAAYDKVR (66 aa)) constitute a J domain. 2 stretches are compositionally biased toward basic and acidic residues: residues 78–106 (ARKQ…RERQ) and 150–166 (IRQD…ENTE). 2 disordered regions span residues 78 to 124 (ARKQ…TTTL) and 150 to 170 (IRQD…GKGT). One can recognise an RRM domain in the interval 178-249 (KCKKEDESQG…NPLKVSWLEG (72 aa)). Residue K264 is modified to N6-methyllysine.

The protein localises to the cytoplasm. It localises to the nucleus. In terms of biological role, may negatively affect PAX8-induced thyroglobulin/TG transcription. In Rattus norvegicus (Rat), this protein is DnaJ homolog subfamily C member 17 (Dnajc17).